Reading from the N-terminus, the 109-residue chain is Nucleoid-associated protein Ssed_2851 (109 aa).

It belongs to the YbaB/EbfC family. As to quaternary structure, homodimer.

It is found in the cytoplasm. The protein resides in the nucleoid. Binds to DNA and alters its conformation. May be involved in regulation of gene expression, nucleoid organization and DNA protection. This is Nucleoid-associated protein Ssed_2851 from Shewanella sediminis (strain HAW-EB3).